A 392-amino-acid polypeptide reads, in one-letter code: Protein FAM185A (392 aa).

The tract at residues 39 to 60 (YSSGGSERWPGSETEVPPPGPG) is disordered.

The protein is Protein FAM185A (FAM185A) of Homo sapiens (Human).